Here is a 1150-residue protein sequence, read N- to C-terminus: Pyruvate carboxylase (1150 aa).

Residues 3 to 455 (QIKKLLVANR…TTKFIEETPE (453 aa)) enclose the Biotin carboxylation domain. Positions 119, 161, 211, and 278 each coordinate ATP. Positions 123 to 319 (RTTAIKADLP…IVKTQILVAA (197 aa)) constitute an ATP-grasp domain. The active site involves Arg294. One can recognise a Pyruvate carboxyltransferase domain in the interval 533–802 (VLLTDTTFRD…HLRTDIEGME (270 aa)). 541-545 (RDAHQ) serves as a coordination point for substrate. Mn(2+)-binding residues include Asp542, Lys712, His741, and His743. Position 712 is an N6-carboxylysine (Lys712). In terms of domain architecture, Biotinyl-binding spans 1071–1146 (KADKSNPSHI…ATGDLLIEIE (76 aa)). Lys1112 carries the post-translational modification N6-biotinyllysine.

Homotetramer. Requires biotin as cofactor.

It carries out the reaction hydrogencarbonate + pyruvate + ATP = oxaloacetate + ADP + phosphate + H(+). In terms of biological role, catalyzes a 2-step reaction, involving the ATP-dependent carboxylation of the covalently attached biotin in the first step and the transfer of the carboxyl group to pyruvate in the second. The polypeptide is Pyruvate carboxylase (pycA) (Staphylococcus aureus (strain Mu50 / ATCC 700699)).